Here is a 491-residue protein sequence, read N- to C-terminus: Delayed-rectifier potassium channel regulatory subunit KCNS3 (491 aa).

Topologically, residues 1–182 are cytoplasmic; that stretch reads MVFGEFFHRP…IRMENPAYCL (182 aa). The helical transmembrane segment at 183–204 threads the bilayer; the sequence is SAKLIAISSLSVVLASIVAMCV. Residues 205–220 are Extracellular-facing; it reads HSMSEFQNEDGEVDDP. Residues 221 to 243 traverse the membrane as a helical segment; that stretch reads VLEGVEIACIAWFTGELAVRLAA. The Cytoplasmic segment spans residues 244-254; the sequence is APCQKKFWKNP. A helical transmembrane segment spans residues 255–275; that stretch reads LNIIDFVSIIPFYATLAVDTK. The Extracellular portion of the chain corresponds to 276 to 285; it reads EEESEDIENM. The helical; Voltage-sensor transmembrane segment at 286 to 306 threads the bilayer; that stretch reads GKVVQILRLMRIFRILKLARH. The Cytoplasmic segment spans residues 307–321; the sequence is SVGLRSLGATLRHSY. The chain crosses the membrane as a helical span at residues 322–343; the sequence is HEVGLLLLFLSVGISIFSVLIY. The Extracellular segment spans residues 344 to 357; that stretch reads SVEKDDHTSSLTSI. Residues 358–369 constitute an intramembrane region (helical); it reads PICWWWATISMT. Positions 370–375 match the Selectivity filter motif; the sequence is TVGYGD. Residues 370-377 lie within the membrane without spanning it; it reads TVGYGDTH. Over 378-384 the chain is Extracellular; it reads PVTLAGK. Residues 385-413 form a helical membrane-spanning segment; it reads LIASTCIICGILVVALPITIIFNKFSKYY. Residues 414-491 are Cytoplasmic-facing; the sequence is QKQKDIDVDQ…TTSLENCTAK (78 aa).

Belongs to the potassium channel family. S (TC 1.A.1.2) subfamily. Kv9.3/KCNS3 sub-subfamily. In terms of assembly, heterotetramer with KCNB1. Does not form homomultimers. In terms of tissue distribution, detected in whole normal term placental and placental chorionic plate arteries and veins. Detected in syncytiotrophoblast and in blood vessel endothelium within intermediate villi and chorionic plate (at protein level). Detected in most tissues, but not in peripheral blood lymphocytes. The highest levels of expression are in lung.

Its subcellular location is the cell membrane. Potassium channel regulatory subunit that modulates the delayed rectifier potassium channel activity of KCNB1 by namely slowing down the deactivation and inactivation time constants. While it does not form functional channel on its own, it can form functional heterotetrameric channels with KCNB1. The polypeptide is Delayed-rectifier potassium channel regulatory subunit KCNS3 (Homo sapiens (Human)).